Here is a 337-residue protein sequence, read N- to C-terminus: m7GpppX diphosphatase (337 aa).

The disordered stretch occupies residues 1–37; the sequence is MAELAHQQSKRKRELDAEEAEASSTEGEEAGVGNGTS. N-acetylalanine is present on alanine 2. The nuclear localization signal (NLS) signature appears at 10–13; sequence KRKR. A compositionally biased stretch (acidic residues) spans 16–29; that stretch reads DAEEAEASSTEGEE. A phosphoserine mark is found at serine 24 and serine 101. N6-acetyllysine is present on residues lysine 138 and lysine 142. Residues 142 to 154 carry the nuclear export sequence (NES) motif; sequence KYLRQDLHLVRET. Substrate is bound by residues tryptophan 175, glutamate 185, aspartate 205, lysine 207, and 268–279; that span reads HYLPSYYHLHVH. The short motif at 275–279 is the Histidine triad motif element; sequence HLHVH. Residue histidine 277 is the Nucleophile of the active site.

This sequence belongs to the HIT family. As to quaternary structure, homodimer. Associates with components of the exosome multienzyme ribonuclease complex, such as EXOSC3 and EXOSC4. Interacts with NDOR1.

Its subcellular location is the cytoplasm. The protein localises to the nucleus. The catalysed reaction is a 5'-end (N(7)-methyl 5'-triphosphoguanosine)-ribonucleoside in mRNA + H2O = N(7)-methyl-GMP + a 5'-end diphospho-ribonucleoside in mRNA + 2 H(+). The hydrolytic product 7-methylguanosine diphosphate (m7GDP) efficiently inhibits the decapping scavenger activity and acts as a competitive inhibitor in vitro. Inhibited by 2,4-diaminoquinazoline. Functionally, decapping scavenger enzyme that catalyzes the cleavage of a residual cap structure following the degradation of mRNAs by 3'-&gt;5' exosome-mediated mRNA decay pathway. Hydrolyzes cap analog structures like 7-methylguanosine nucleoside triphosphate (m7GpppG) with up to 10 nucleotide substrates (small capped oligoribonucleotides) and specifically releases 5'-phosphorylated RNA fragments and 7-methylguanosine monophosphate (m7GMP). Cleaves cap analog structures like tri-methyl guanosine nucleoside triphosphate (m3(2,2,7)GpppG) with very poor efficiency. Does not hydrolyze unmethylated cap analog (GpppG) and shows no decapping activity on intact m7GpppG-capped mRNA molecules longer than 25 nucleotides. Does not hydrolyze 7-methylguanosine diphosphate (m7GDP) to m7GMP. May also play a role in the 5'-&gt;3 mRNA decay pathway; m7GDP, the downstream product released by the 5'-&gt;3' mRNA mediated decapping activity, may be also converted by DCPS to m7GMP. Binds to m7GpppG and strongly to m7GDP. Plays a role in first intron splicing of pre-mRNAs. Inhibits activation-induced cell death. In Bos taurus (Bovine), this protein is m7GpppX diphosphatase (DCPS).